Consider the following 304-residue polypeptide: Probable actin-related protein 2/3 complex subunit 2 (304 aa).

The protein belongs to the ARPC2 family. As to quaternary structure, component of the Arp2/3 complex.

It is found in the cytoplasm. It localises to the cytoskeleton. Functionally, functions as actin-binding component of the Arp2/3 complex which is involved in regulation of actin polymerization and together with an activating nucleation-promoting factor (NPF) mediates the formation of branched actin networks. Seems to contact the mother actin filament. The protein is Probable actin-related protein 2/3 complex subunit 2 (Arc-p34) of Anopheles gambiae (African malaria mosquito).